The chain runs to 170 residues: Shikimate kinase (170 aa).

11 to 16 (LSGKST) serves as a coordination point for ATP. Ser15 is a Mg(2+) binding site. The substrate site is built by Asp33, Arg57, and Gly79. Arg119 lines the ATP pocket. Arg137 is a binding site for substrate.

It belongs to the shikimate kinase family. As to quaternary structure, monomer. It depends on Mg(2+) as a cofactor.

It localises to the cytoplasm. The enzyme catalyses shikimate + ATP = 3-phosphoshikimate + ADP + H(+). Its pathway is metabolic intermediate biosynthesis; chorismate biosynthesis; chorismate from D-erythrose 4-phosphate and phosphoenolpyruvate: step 5/7. Functionally, catalyzes the specific phosphorylation of the 3-hydroxyl group of shikimic acid using ATP as a cosubstrate. The protein is Shikimate kinase of Clostridium botulinum (strain ATCC 19397 / Type A).